The sequence spans 439 residues: Serine--tRNA ligase (439 aa).

242–244 (TAE) is an L-serine binding site. ATP is bound at residue 273–275 (RQE). Residue Glu296 coordinates L-serine. 360–363 (EISS) serves as a coordination point for ATP. Residue Ser396 coordinates L-serine.

The protein belongs to the class-II aminoacyl-tRNA synthetase family. Type-1 seryl-tRNA synthetase subfamily. In terms of assembly, homodimer. The tRNA molecule binds across the dimer.

It localises to the cytoplasm. It catalyses the reaction tRNA(Ser) + L-serine + ATP = L-seryl-tRNA(Ser) + AMP + diphosphate + H(+). It carries out the reaction tRNA(Sec) + L-serine + ATP = L-seryl-tRNA(Sec) + AMP + diphosphate + H(+). It participates in aminoacyl-tRNA biosynthesis; selenocysteinyl-tRNA(Sec) biosynthesis; L-seryl-tRNA(Sec) from L-serine and tRNA(Sec): step 1/1. Catalyzes the attachment of serine to tRNA(Ser). Is also able to aminoacylate tRNA(Sec) with serine, to form the misacylated tRNA L-seryl-tRNA(Sec), which will be further converted into selenocysteinyl-tRNA(Sec). The polypeptide is Serine--tRNA ligase (Oenococcus oeni (strain ATCC BAA-331 / PSU-1)).